Reading from the N-terminus, the 365-residue chain is 2'-hydroxybiphenyl-2-sulfinate desulfinase (365 aa).

Cysteine 27 is a catalytic residue. Residues cysteine 27, histidine 60, and arginine 70 each coordinate 2'-hydroxybiphenyl-2-sulfinate. Arginine 70 is an active-site residue.

Belongs to the DszB desulfinase family. As to quaternary structure, monomer.

The protein resides in the cytoplasm. It carries out the reaction 2'-hydroxybiphenyl-2-sulfinate + H2O = biphenyl-2-ol + sulfite + H(+). It functions in the pathway sulfur metabolism; dibenzothiophene degradation. Functionally, catalyzes the third and final step of the '4S' desulfurization pathway that removes covalently bound sulfur from dibenzothiophene (DBT) without breaking carbon-carbon bonds. Oxidizes 2-(2'-hydroxyphenyl)benzene sulphinate (HBPS) to 2-hydroxybiphenyl (HBP) plus sulfite. The rate-limiting step of the '4S' desulfurization pathway. The polypeptide is 2'-hydroxybiphenyl-2-sulfinate desulfinase (Rhodococcus erythropolis (Arthrobacter picolinophilus)).